We begin with the raw amino-acid sequence, 32 residues long: Alpha-2-macroglobulin homolog (32 aa).

Positions 16-19 (CGEQ) form a cross-link, isoglutamyl cysteine thioester (Cys-Gln).

It belongs to the protease inhibitor I39 (alpha-2-macroglobulin) family. Homodimer; disulfide-linked.

Its subcellular location is the secreted. Its function is as follows. Is able to inhibit all four classes of proteinases by a unique 'trapping' mechanism. This protein has a peptide stretch, called the 'bait region' which contains specific cleavage sites for different proteinases. When a proteinase cleaves the bait region, a conformational change is induced in the protein which traps the proteinase. The entrapped enzyme remains active against low molecular weight substrates (activity against high molecular weight substrates is greatly reduced). Following cleavage in the bait region a thioester bond is hydrolyzed and mediates the covalent binding of the protein to the proteinase. The polypeptide is Alpha-2-macroglobulin homolog (Pacifastacus leniusculus (Signal crayfish)).